We begin with the raw amino-acid sequence, 266 residues long: Imidazole glycerol phosphate synthase subunit HisF (266 aa).

Active-site residues include aspartate 11 and aspartate 130.

This sequence belongs to the HisA/HisF family. Heterodimer of HisH and HisF.

The protein resides in the cytoplasm. It carries out the reaction 5-[(5-phospho-1-deoxy-D-ribulos-1-ylimino)methylamino]-1-(5-phospho-beta-D-ribosyl)imidazole-4-carboxamide + L-glutamine = D-erythro-1-(imidazol-4-yl)glycerol 3-phosphate + 5-amino-1-(5-phospho-beta-D-ribosyl)imidazole-4-carboxamide + L-glutamate + H(+). It functions in the pathway amino-acid biosynthesis; L-histidine biosynthesis; L-histidine from 5-phospho-alpha-D-ribose 1-diphosphate: step 5/9. IGPS catalyzes the conversion of PRFAR and glutamine to IGP, AICAR and glutamate. The HisF subunit catalyzes the cyclization activity that produces IGP and AICAR from PRFAR using the ammonia provided by the HisH subunit. The protein is Imidazole glycerol phosphate synthase subunit HisF of Verminephrobacter eiseniae (strain EF01-2).